A 1087-amino-acid polypeptide reads, in one-letter code: Exportin-7-A (1087 aa).

The 67-residue stretch at 30–96 folds into the Importin N-terminal domain; that stretch reads AEKALVEFTN…RNYVLTYLAT (67 aa).

It belongs to the exportin family. Expressed in oocytes (at protein level).

It localises to the cytoplasm. The protein resides in the nucleus. In terms of biological role, mediates the nuclear export of proteins (cargos) with broad substrate specificity. The protein is Exportin-7-A (xpo7-a) of Xenopus laevis (African clawed frog).